The primary structure comprises 205 residues: MGPEELLTKSGVSRETLERLRLYADLLVKWQARINLVGPDTVPDLWSRHMLDSVQLFPLIKVGARRLVDLGSGAGFPGLVLAVMGAPDVHLVESDSRKCAFLREVARVTETPVTVINKRIEQVAPLGADVVTARALAPLDRLLGWAFPHLAEGGECLFLKGRGAEDELTASAKEWNITASRVPSLTDPGGLVLHLREVSRGRAQP.

Residues glycine 71, phenylalanine 76, 120–121 (IE), and arginine 134 contribute to the S-adenosyl-L-methionine site.

It belongs to the methyltransferase superfamily. RNA methyltransferase RsmG family.

Its subcellular location is the cytoplasm. It carries out the reaction guanosine(527) in 16S rRNA + S-adenosyl-L-methionine = N(7)-methylguanosine(527) in 16S rRNA + S-adenosyl-L-homocysteine. Its function is as follows. Specifically methylates the N7 position of guanine in position 527 of 16S rRNA. The polypeptide is Ribosomal RNA small subunit methyltransferase G (Paramagnetospirillum magneticum (strain ATCC 700264 / AMB-1) (Magnetospirillum magneticum)).